A 422-amino-acid chain; its full sequence is Enolase 2 (422 aa).

Position 162 (Gln162) interacts with (2R)-2-phosphoglycerate. Glu204 acts as the Proton donor in catalysis. Mg(2+) contacts are provided by Asp241, Glu285, and Asp312. The (2R)-2-phosphoglycerate site is built by Lys337, Arg366, Ser367, and Lys388. The active-site Proton acceptor is the Lys337.

It belongs to the enolase family. The cofactor is Mg(2+).

It is found in the cytoplasm. The protein localises to the secreted. It localises to the cell surface. The enzyme catalyses (2R)-2-phosphoglycerate = phosphoenolpyruvate + H2O. The protein operates within carbohydrate degradation; glycolysis; pyruvate from D-glyceraldehyde 3-phosphate: step 4/5. Its function is as follows. Catalyzes the reversible conversion of 2-phosphoglycerate (2-PG) into phosphoenolpyruvate (PEP). It is essential for the degradation of carbohydrates via glycolysis. This Lactococcus lactis subsp. lactis (strain IL1403) (Streptococcus lactis) protein is Enolase 2.